A 308-amino-acid chain; its full sequence is MAENPVCTAQVNIGSGSQSNSCISILGSNSINSNSVPVLFCFSVFARPSSVPHGSGYELLIQKFLSLYGDQIDMHRKFVVQLFAEEWGQYIDLPKGFIISERCKIRLVPLQIQLTTLGNLTPASTVFFCCDMQERFRPAIKYFGDIISVGQRLLQGARILGIPVIATEQYPKGLGSTVQELDLTGVKLVLPKTKFSMVLPEVEAALAETPGVRSVVLFGVETHVCIQQTALDLIGRGVEVHIVADATSSRSMMDRMFALERLARNGIIITTSEAILLQLVADKDHPKFKEIQNLIKASAPESGLLSKV.

Belongs to the isochorismatase family.

This Xenopus tropicalis (Western clawed frog) protein is Isochorismatase domain-containing protein 1 (isoc1).